Here is a 456-residue protein sequence, read N- to C-terminus: Probable hexose phosphate transport protein (456 aa).

The next 11 helical transmembrane spans lie at 34–54 (IFYS…SFTF), 70–90 (LGII…VSGV), 113–133 (IFFG…INGW), 161–181 (VWST…GIAI), 185–205 (GWRG…FILI), 257–277 (YVLS…IYVV), 302–322 (LCVS…GWLS), 331–351 (GPMN…LWGT), 362–382 (AFLF…GLAA), 394–414 (ASGF…YPLG), and 421–441 (GWHG…LFFL).

Belongs to the major facilitator superfamily. Organophosphate:Pi antiporter (OPA) (TC 2.A.1.4) family.

Its subcellular location is the cell membrane. Functionally, transport protein for sugar phosphate uptake. This Chlamydia muridarum (strain MoPn / Nigg) protein is Probable hexose phosphate transport protein.